Consider the following 313-residue polypeptide: Ketimine reductase mu-crystallin (313 aa).

Arginine 47 serves as a coordination point for 3,3',5-triiodo-L-thyronine. 13 residues coordinate NADPH: serine 90, histidine 91, arginine 118, alanine 143, valine 145, glutamine 146, asparagine 167, arginine 168, threonine 169, asparagine 172, threonine 204, methionine 205, and valine 225. Glutamate 256 is a binding site for 3,3',5-triiodo-L-thyronine. Residue serine 291 coordinates NADPH.

This sequence belongs to the ornithine cyclodeaminase/mu-crystallin family. Homodimer. Binds the thyroid hormone triiodothyronine (T3); T3 binding inhibits enzymatic activity. Expressed in the spiral ligament of the cochlea (at protein level).

It localises to the cytoplasm. It catalyses the reaction L-pipecolate + NADP(+) = Delta(1)-piperideine-2-carboxylate + NADPH + H(+). It carries out the reaction L-pipecolate + NAD(+) = Delta(1)-piperideine-2-carboxylate + NADH + H(+). The enzyme catalyses L-proline + NADP(+) = 1-pyrroline-2-carboxylate + NADPH + H(+). The catalysed reaction is L-proline + NAD(+) = 1-pyrroline-2-carboxylate + NADH + H(+). It catalyses the reaction (3R)-1,4-thiomorpholine-3-carboxylate + NAD(+) = 3,4-dehydrothiomorpholine-3-carboxylate + NADH + 2 H(+). It carries out the reaction (3R)-1,4-thiomorpholine-3-carboxylate + NADP(+) = 3,4-dehydrothiomorpholine-3-carboxylate + NADPH + 2 H(+). The enzyme catalyses (S)-cystathionine ketimine + NADH + 2 H(+) = (3R,5S)-2,3,5,6,7-pentahydro-1,4-thiazepine-3,5-dicarboxylate + NAD(+). The catalysed reaction is (S)-cystathionine ketimine + NADPH + 2 H(+) = (3R,5S)-2,3,5,6,7-pentahydro-1,4-thiazepine-3,5-dicarboxylate + NADP(+). It catalyses the reaction (R)-lanthionine ketimine + NADPH + 2 H(+) = (3R,5R)-1,4-thiomorpholine-3,5-dicarboxylate + NADP(+). It carries out the reaction Delta(2)-thiazoline-2-carboxylate + NADPH + 2 H(+) = L-thiazolidine-2-carboxylate + NADP(+). In terms of biological role, catalyzes the NAD(P)H-dependent reduction of imine double bonds of a number of cyclic ketimine substrates, including sulfur-containing cyclic ketimines. Under physiological conditions, it efficiently catalyzes delta(1)-piperideine-2-carboxylate (P2C) and delta(1)-pyrroline-2-carboxylate (Pyr2C) reduction, suggesting a central role in lysine and glutamate metabolism. Additional substrates are delta(2)-thiazoline-2-carboxylate (T2C), 3,4-dehydrothiomorpholine-3-carboxylate (AECK), and (R)-lanthionine ketimine (LK) that is reduced at very low rate compared to other substrates. Also catalyzes the NAD(P)H-dependent reduction of (S)-cystathionine ketimine (CysK). This Mus musculus (Mouse) protein is Ketimine reductase mu-crystallin.